A 2176-amino-acid chain; its full sequence is Methyl-CpG-binding domain-containing protein 9 (2176 aa).

Residues 1 to 13 (MEPTDSTNEQLGD) show a composition bias toward polar residues. Disordered regions lie at residues 1 to 20 (MEPT…AAVK) and 28 to 85 (GIDL…RDAS). The PHD-type 1 zinc-finger motif lies at 83–133 (DASCGACGRPESIELVVVCDACERGFHMSCVNDGVEAAPSADWMCSDCRTG). The RING-type 1; degenerate zinc-finger motif lies at 86 to 131 (CGACGRPESIELVVVCDACERGFHMSCVNDGVEAAPSADWMCSDCR). The 70-residue stretch at 258–327 (RHFISERHGV…MDAEIRNENS (70 aa)) folds into the MBD domain. The region spanning 403–456 (GCPMQFEDFFVLSLGRIDIRQSYHNVNVIYPIGYKSCWHDKITGSLFTCEVSDG) is the FYR N-terminal domain. The stretch at 491 to 511 (EQNSDKLSNRRDSTQERDDDA) forms a coiled coil. Positions 550-698 (SSRVDFDKNL…ESCTNYRTLK (149 aa)) constitute an FYR C-terminal domain. 3 short sequence motifs (nuclear localization signal) span residues 914-921 (SRRGRKKD), 1124-1131 (KKRTYISV), and 1256-1263 (YRKLECLS). Residues 1098 to 1137 (PTKKAVLSLLADIRGGDLVQRSIKGTKKRTYISVSDVIMK) form a Pumilio repeat. Residues 1130–1245 (SVSDVIMKKC…EKFKSLYEAE (116 aa)) enclose the Bromo domain. Positions 1251 to 1273 (QKLKDYRKLECLSAEMKKEIKDI) form a coiled coil. The segment at 1287–1337 (EGVCKVCGVDKDDDSVLLCDTCDAEYHTYCLNPPLIRIPDGNWYCPSCVIA) adopts a PHD-type 2 zinc-finger fold. The segment at 1290–1335 (CKVCGVDKDDDSVLLCDTCDAEYHTYCLNPPLIRIPDGNWYCPSCV) adopts an RING-type 2; degenerate zinc-finger fold. The Nuclear localization signal signature appears at 1337–1344 (AKRMAQEA). Positions 1410 to 1437 (QHLEQCAEAIIEMQQKLRSLSSEWKNAK) form a coiled coil. Disordered regions lie at residues 1472-1553 (GCDP…NLPE) and 1565-1595 (GRNH…QELQ). 3 stretches are compositionally biased toward polar residues: residues 1492–1513 (SSTA…TQPG), 1523–1532 (KISSPETISS), and 1585–1595 (DASSQASQELQ). A coiled-coil region spans residues 1588 to 1628 (SQASQELQACQQDLSATSNEIQNLQQSIRSIESQLLKQSIR). Positions 1761 to 1768 (EKRYGPCI) match the Nuclear localization signal motif. The tract at residues 2136–2176 (IDETKPIISLPDQKSQPVSDSQERSSRVRRSGKKRKEPEGS) is disordered.

Interacts with histone H4. Expressed in leaves, buds, flowers and stems.

It localises to the nucleus. The catalysed reaction is L-lysyl-[protein] + acetyl-CoA = N(6)-acetyl-L-lysyl-[protein] + CoA + H(+). Functionally, probable transcriptional regulator that acts as a histone acetyltransferase. Mediates the acetylation of histone H3 and H4 of target loci (e.g. FLC). Involved in an auxin-independent regulation of shoot branching and flowering time. The chain is Methyl-CpG-binding domain-containing protein 9 (MBD9) from Arabidopsis thaliana (Mouse-ear cress).